A 461-amino-acid polypeptide reads, in one-letter code: Alcaligin biosynthesis enzyme (461 aa).

9–15 (VAIGIGP) contacts FAD.

Belongs to the lysine N(6)-hydroxylase/L-ornithine N(5)-oxygenase family. It depends on FAD as a cofactor.

The protein operates within siderophore biosynthesis; alcaligin biosynthesis. The polypeptide is Alcaligin biosynthesis enzyme (alcA) (Bordetella parapertussis (strain 12822 / ATCC BAA-587 / NCTC 13253)).